Reading from the N-terminus, the 245-residue chain is 1-(5-phosphoribosyl)-5-[(5-phosphoribosylamino)methylideneamino] imidazole-4-carboxamide isomerase (245 aa).

Aspartate 7 (proton acceptor) is an active-site residue. The active-site Proton donor is aspartate 129.

This sequence belongs to the HisA/HisF family.

The protein localises to the cytoplasm. It catalyses the reaction 1-(5-phospho-beta-D-ribosyl)-5-[(5-phospho-beta-D-ribosylamino)methylideneamino]imidazole-4-carboxamide = 5-[(5-phospho-1-deoxy-D-ribulos-1-ylimino)methylamino]-1-(5-phospho-beta-D-ribosyl)imidazole-4-carboxamide. The protein operates within amino-acid biosynthesis; L-histidine biosynthesis; L-histidine from 5-phospho-alpha-D-ribose 1-diphosphate: step 4/9. This Shewanella oneidensis (strain ATCC 700550 / JCM 31522 / CIP 106686 / LMG 19005 / NCIMB 14063 / MR-1) protein is 1-(5-phosphoribosyl)-5-[(5-phosphoribosylamino)methylideneamino] imidazole-4-carboxamide isomerase.